The sequence spans 494 residues: Cobyric acid synthase (494 aa).

The region spanning 248–445 (ELEIAVLKLP…LHGIFDNGPW (198 aa)) is the GATase cobBQ-type domain. The active-site Nucleophile is the C329. Residue H437 is part of the active site.

Belongs to the CobB/CobQ family. CobQ subfamily.

The protein operates within cofactor biosynthesis; adenosylcobalamin biosynthesis. Catalyzes amidations at positions B, D, E, and G on adenosylcobyrinic A,C-diamide. NH(2) groups are provided by glutamine, and one molecule of ATP is hydrogenolyzed for each amidation. The chain is Cobyric acid synthase from Synechococcus sp. (strain WH7803).